The following is a 505-amino-acid chain: Putative thymidine phosphorylase (505 aa).

It belongs to the thymidine/pyrimidine-nucleoside phosphorylase family. Type 2 subfamily.

It catalyses the reaction thymidine + phosphate = 2-deoxy-alpha-D-ribose 1-phosphate + thymine. The polypeptide is Putative thymidine phosphorylase (Hahella chejuensis (strain KCTC 2396)).